The sequence spans 243 residues: Phosphoribosylaminoimidazole-succinocarboxamide synthase (243 aa).

This sequence belongs to the SAICAR synthetase family.

The catalysed reaction is 5-amino-1-(5-phospho-D-ribosyl)imidazole-4-carboxylate + L-aspartate + ATP = (2S)-2-[5-amino-1-(5-phospho-beta-D-ribosyl)imidazole-4-carboxamido]succinate + ADP + phosphate + 2 H(+). Its pathway is purine metabolism; IMP biosynthesis via de novo pathway; 5-amino-1-(5-phospho-D-ribosyl)imidazole-4-carboxamide from 5-amino-1-(5-phospho-D-ribosyl)imidazole-4-carboxylate: step 1/2. The sequence is that of Phosphoribosylaminoimidazole-succinocarboxamide synthase from Lactiplantibacillus plantarum (strain ATCC BAA-793 / NCIMB 8826 / WCFS1) (Lactobacillus plantarum).